Reading from the N-terminus, the 178-residue chain is Acireductone dioxygenase (178 aa).

His-100, His-102, Glu-106, and His-145 together coordinate Fe(2+). Ni(2+) is bound by residues His-100, His-102, Glu-106, and His-145.

This sequence belongs to the acireductone dioxygenase (ARD) family. As to quaternary structure, monomer. The cofactor is Fe(2+). Ni(2+) is required as a cofactor.

It catalyses the reaction 1,2-dihydroxy-5-(methylsulfanyl)pent-1-en-3-one + O2 = 3-(methylsulfanyl)propanoate + CO + formate + 2 H(+). It carries out the reaction 1,2-dihydroxy-5-(methylsulfanyl)pent-1-en-3-one + O2 = 4-methylsulfanyl-2-oxobutanoate + formate + 2 H(+). The protein operates within amino-acid biosynthesis; L-methionine biosynthesis via salvage pathway; L-methionine from S-methyl-5-thio-alpha-D-ribose 1-phosphate: step 5/6. Catalyzes 2 different reactions between oxygen and the acireductone 1,2-dihydroxy-3-keto-5-methylthiopentene (DHK-MTPene) depending upon the metal bound in the active site. Fe-containing acireductone dioxygenase (Fe-ARD) produces formate and 2-keto-4-methylthiobutyrate (KMTB), the alpha-ketoacid precursor of methionine in the methionine recycle pathway. Ni-containing acireductone dioxygenase (Ni-ARD) produces methylthiopropionate, carbon monoxide and formate, and does not lie on the methionine recycle pathway. The polypeptide is Acireductone dioxygenase (mtnD) (Bacillus subtilis (strain 168)).